The primary structure comprises 175 residues: Translation initiation factor IF-3 (175 aa).

The protein belongs to the IF-3 family. As to quaternary structure, monomer.

Its subcellular location is the cytoplasm. Functionally, IF-3 binds to the 30S ribosomal subunit and shifts the equilibrium between 70S ribosomes and their 50S and 30S subunits in favor of the free subunits, thus enhancing the availability of 30S subunits on which protein synthesis initiation begins. In Aquifex aeolicus (strain VF5), this protein is Translation initiation factor IF-3.